The following is a 324-amino-acid chain: E3 ubiquitin-protein ligase SIAH2 (324 aa).

The segment covering 1 to 15 (MSRPSSTGPSANKPC) has biased composition (polar residues). The disordered stretch occupies residues 1 to 42 (MSRPSSTGPSANKPCSKQPPPQPQHTPSPAAPPAAATISAAG). At Ser6 the chain carries Phosphoserine. Ser16 is subject to Phosphoserine; by DYRK2. Pro residues predominate over residues 17-32 (KQPPPQPQHTPSPAAP). Thr26 bears the Phosphothreonine; by DYRK2 mark. Residue Ser28 is modified to Phosphoserine; by DYRK2 and MAPK14. The segment covering 33 to 42 (PAAATISAAG) has biased composition (low complexity). Phosphoserine; by DYRK2 is present on Ser68. An RING-type zinc finger spans residues 80–115 (CPVCFDYVLPPILQCQAGHLVCNQCRQKLSCCPTCR). Thr119 is modified (phosphothreonine; by DYRK2). The SBD stretch occupies residues 130 to 322 (VASAVLFPCK…LGINVTISTC (193 aa)). The SIAH-type zinc-finger motif lies at 133-193 (AVLFPCKYAT…VMSHLMHAHK (61 aa)). Cys138, Cys145, His157, Cys161, Cys168, Cys175, His187, and His192 together coordinate Zn(2+).

It belongs to the SINA (Seven in absentia) family. In terms of assembly, homodimer. Interacts with UBE2E2. Interacts with PEG3. Interacts with VAV1, without mediating its ubiquitin-mediated degradation. Interacts with CACYBP/SIP. Probable component of some large E3 complex possibly composed of UBE2D1, SIAH2, CACYBP/SIP, SKP1, APC and TBL1X. Interacts with PEG10, which may inhibit its activity. Interacts with EGLN2 and SNCAIP. Interacts with DYRK2. Interacts with NR1D1 and NR1D2. Interacts with DCC. Interacts with AXIN1. Post-translationally, phosphorylated at Ser-28 by MAPK14, which mediates the degradation by the proteasome of EGLN3. Phosphorylated at Ser-28 by DYRK2; this increases the ubiquitin ligase activity and promotes degradation of EGLN3. As to expression, widely expressed at low level.

The protein resides in the cytoplasm. Its subcellular location is the nucleus. It carries out the reaction S-ubiquitinyl-[E2 ubiquitin-conjugating enzyme]-L-cysteine + [acceptor protein]-L-lysine = [E2 ubiquitin-conjugating enzyme]-L-cysteine + N(6)-ubiquitinyl-[acceptor protein]-L-lysine.. It functions in the pathway protein modification; protein ubiquitination. With respect to regulation, inhibited by interaction with SNCAIP (isoform 2, but not isoform 1). May be inhibited by interaction with PEG10. Its function is as follows. E3 ubiquitin-protein ligase that mediates ubiquitination and subsequent proteasomal degradation of target proteins. E3 ubiquitin ligases accept ubiquitin from an E2 ubiquitin-conjugating enzyme in the form of a thioester and then directly transfers the ubiquitin to targeted substrates. Mediates E3 ubiquitin ligase activity either through direct binding to substrates or by functioning as the essential RING domain subunit of larger E3 complexes. Triggers the ubiquitin-mediated degradation of many substrates, including proteins involved in transcription regulation (GPS2, POU2AF1, PML, NCOR1), a cell surface receptor (DCC), an antiapoptotic protein (BAG1), and a protein involved in synaptic vesicle function in neurons (SYP). Mediates ubiquitination and proteasomal degradation of DYRK2 in response to hypoxia. It is thereby involved in apoptosis, tumor suppression, cell cycle, transcription and signaling processes. Has some overlapping function with SIAH1. Triggers the ubiquitin-mediated degradation of TRAF2, whereas SIAH1 does not. Promotes monoubiquitination of SNCA. Regulates cellular clock function via ubiquitination of the circadian transcriptional repressors NR1D1 and NR1D2 leading to their proteasomal degradation. Plays an important role in mediating the rhythmic degradation/clearance of NR1D1 and NR1D2 contributing to their circadian profile of protein abundance. Mediates ubiquitination and degradation of EGLN2 and EGLN3 in response to the unfolded protein response (UPR), leading to their degradation and subsequent stabilization of ATF4. Also part of the Wnt signaling pathway in which it mediates the Wnt-induced ubiquitin-mediated proteasomal degradation of AXIN1. This chain is E3 ubiquitin-protein ligase SIAH2 (SIAH2), found in Homo sapiens (Human).